The chain runs to 402 residues: MITMKHVILVGDGMADYPLDELDGKTPLQVADKPNMDQLAGMGACGLLRTVPEGMEAGSDVANLSIMGYDPRRYYTGRGPLEAASIGVELGDDDVAFRCNLINADERIVDFNAGHIETAEASSLIDALNHELETRGRFYAGVSYRNLFVIEGRGYTSVRVEPPHDIVGESVAAHLPSGSEEADHIRELMLESAGVLRSHEVNLKRESMGKRPATMIWLWGQGLRPSMEPFSERYGIRGATITAVDLIKGLGVYAGLENIHVPGATGYLDTDYRAKGRYAAGALEEYDFLYVHVEAPDEAGHAGDAEEKIRAIENIDRFVLGRLLDALSDHEHRIAVLPDHPTPIEIRTHVPDPVPCILAGDGVDADQVKSYDEFTVREGSLGTWEAHRLMEIMMDPAARLRQ.

The protein belongs to the BPG-independent phosphoglycerate mutase family. A-PGAM subfamily.

It carries out the reaction (2R)-2-phosphoglycerate = (2R)-3-phosphoglycerate. It functions in the pathway carbohydrate degradation; glycolysis; pyruvate from D-glyceraldehyde 3-phosphate: step 3/5. Functionally, catalyzes the interconversion of 2-phosphoglycerate and 3-phosphoglycerate. In Methanothermobacter thermautotrophicus (strain ATCC 29096 / DSM 1053 / JCM 10044 / NBRC 100330 / Delta H) (Methanobacterium thermoautotrophicum), this protein is 2,3-bisphosphoglycerate-independent phosphoglycerate mutase 2 (apgM2).